A 512-amino-acid polypeptide reads, in one-letter code: Sucrose transport protein SUC2 (512 aa).

Residues methionine 1–lysine 31 lie on the Cytoplasmic side of the membrane. The helical transmembrane segment at isoleucine 32–leucine 52 threads the bilayer. Over leucine 53–lysine 65 the chain is Extracellular. A helical transmembrane segment spans residues tryptophan 66–glycine 86. Topologically, residues tyrosine 87–arginine 100 are cytoplasmic. Residues proline 101–alanine 121 traverse the membrane as a helical segment. Residues aspartate 122–arginine 138 are Extracellular-facing. Residues alanine 139–glycine 159 traverse the membrane as a helical segment. Over proline 160–arginine 177 the chain is Cytoplasmic. A helical transmembrane segment spans residues threonine 178–glycine 198. Topologically, residues serine 199–lysine 223 are extracellular. The helical transmembrane segment at threonine 224–valine 244 threads the bilayer. At lysine 245–proline 278 the chain is on the cytoplasmic side. A helical transmembrane segment spans residues methionine 279–phenylalanine 299. Topologically, residues aspartate 300–glycine 332 are extracellular. Residues alanine 333–isoleucine 353 traverse the membrane as a helical segment. The Cytoplasmic segment spans residues glycine 354–arginine 362. Residues leucine 363–lysine 383 form a helical membrane-spanning segment. The Extracellular portion of the chain corresponds to glutamine 384–alanine 407. The N-linked (GlcNAc...) asparagine glycan is linked to asparagine 402. The helical transmembrane segment at leucine 408–leucine 428 threads the bilayer. Residues alanine 429–glutamine 440 are Cytoplasmic-facing. The helical transmembrane segment at glycine 441–glycine 461 threads the bilayer. At glycine 462 to asparagine 473 the chain is on the extracellular side. Residues isoleucine 474–valine 494 traverse the membrane as a helical segment. Over leucine 495–histidine 512 the chain is Cytoplasmic.

This sequence belongs to the glycoside-pentoside-hexuronide (GPH) cation symporter transporter (TC 2.A.2.4) family. In terms of assembly, homodimer. Interacts with SUC3 and SUC4. Expressed in leaves and, to a lower extent, in roots, flowers and stems. Highly specific to the phloem, exclusively localized in companion cells (at protein level).

Its subcellular location is the cell membrane. It carries out the reaction sucrose(out) + H(+)(out) = sucrose(in) + H(+)(in). It functions in the pathway glycan biosynthesis; sucrose metabolism. Inhibited by protonophores (e.g. dinitrophenol and carbonyl cyanide m-chlorophenyl-hydrazone (CCCP)) and SH group inhibitors (e.g. N-ethylmaleimide (NEM) and p-chloromercuriphenyl sulphonic acid (PCMPS)). Responsible for the transport of sucrose into the cell, with the concomitant uptake of protons (symport system). Can also transport other glucosides such as maltose, arbutin (hydroquinone-beta-D-glucoside), salicin (2-(hydroxymethyl)phenyl-beta-D-glucoside), alpha-phenylglucoside, beta-phenylglucoside, alpha-paranitrophenylglucoside, beta-paranitrophenylglucoside, and paranitrophenyl-beta-thioglucoside. May also transport biotin. Required for apoplastic phloem sucrose loading in source tissues (e.g. leaves) in order to transport it to sink tissues (e.g. roots, flowers). This Arabidopsis thaliana (Mouse-ear cress) protein is Sucrose transport protein SUC2.